The following is a 160-amino-acid chain: Ribosomal RNA large subunit methyltransferase H (160 aa).

S-adenosyl-L-methionine contacts are provided by residues L76, G108, and 127–132 (LGKMTW).

This sequence belongs to the RNA methyltransferase RlmH family. Homodimer.

The protein resides in the cytoplasm. The enzyme catalyses pseudouridine(1915) in 23S rRNA + S-adenosyl-L-methionine = N(3)-methylpseudouridine(1915) in 23S rRNA + S-adenosyl-L-homocysteine + H(+). Its function is as follows. Specifically methylates the pseudouridine at position 1915 (m3Psi1915) in 23S rRNA. The chain is Ribosomal RNA large subunit methyltransferase H from Sinorhizobium fredii (strain NBRC 101917 / NGR234).